Reading from the N-terminus, the 336-residue chain is GTPase Obg (336 aa).

The 159-residue stretch at 1 to 159 folds into the Obg domain; the sequence is MKFVDSATVF…LELAMELKLM (159 aa). Positions 120–143 are disordered; the sequence is GGHGGRGNQHFATSTNQAPRRSEP. Positions 129–138 are enriched in polar residues; sequence HFATSTNQAP. The 164-residue stretch at 160–323 folds into the OBG-type G domain; that stretch reads ADVGLVGFPN…LKDELWRQVS (164 aa). GTP contacts are provided by residues 166-173, 191-195, 213-216, 280-283, and 304-306; these read GFPNAGKS, FTTLV, DIPG, TKMD, and SSV. Mg(2+) contacts are provided by Ser-173 and Thr-193.

The protein belongs to the TRAFAC class OBG-HflX-like GTPase superfamily. OBG GTPase family. In terms of assembly, monomer. It depends on Mg(2+) as a cofactor.

The protein resides in the cytoplasm. An essential GTPase which binds GTP, GDP and possibly (p)ppGpp with moderate affinity, with high nucleotide exchange rates and a fairly low GTP hydrolysis rate. Plays a role in control of the cell cycle, stress response, ribosome biogenesis and in those bacteria that undergo differentiation, in morphogenesis control. The chain is GTPase Obg from Chlorobium phaeovibrioides (strain DSM 265 / 1930) (Prosthecochloris vibrioformis (strain DSM 265)).